A 644-amino-acid chain; its full sequence is Uromodulin (644 aa).

The signal sequence occupies residues 1–26; the sequence is MGQLLSLTWLLLVMVVTPWFTVAGAN. Residues 30-66 form the EGF-like 1 domain; the sequence is EARRCSECHDNATCVLDGVVTTCSCQAGFTGDGLVCE. Cystine bridges form between cysteine 34/cysteine 43, cysteine 37/cysteine 52, cysteine 54/cysteine 65, cysteine 71/cysteine 84, cysteine 79/cysteine 93, cysteine 95/cysteine 107, cysteine 113/cysteine 127, cysteine 121/cysteine 136, cysteine 138/cysteine 149, cysteine 151/cysteine 162, cysteine 156/cysteine 173, cysteine 177/cysteine 270, cysteine 198/cysteine 285, cysteine 220/cysteine 258, cysteine 226/cysteine 290, cysteine 251/cysteine 259, cysteine 300/cysteine 309, cysteine 303/cysteine 318, cysteine 320/cysteine 350, cysteine 338/cysteine 428, and cysteine 369/cysteine 392. The N-linked (GlcNAc...) asparagine glycan is linked to asparagine 40. In terms of domain architecture, EGF-like 2; calcium-binding spans 67-108; it reads DIDECATPWTHNCSNSICMNTLGSYECSCQDGFRLTPGLGCI. N-linked (GlcNAc...) asparagine glycosylation is present at asparagine 78. The 42-residue stretch at 109–150 folds into the EGF-like 3; calcium-binding domain; the sequence is DVNECTEQGLSNCHSLATCVNTEGSYSCVCPKGYRGDGWYCE. The tract at residues 151–174 is beta hairpin; it reads CSPGFCEPGLDCLPQGPSGKLVCQ. Positions 175–294 are D10C; that stretch reads DPCNVYETLT…CNLAYCTDPS (120 aa). N-linked (GlcNAc...) asparagine glycosylation occurs at asparagine 235. An N-linked (GlcNAc...) asparagine glycan is attached at asparagine 278. Positions 295–326 constitute an EGF-like 4 domain; the sequence is SVEGTCEECGVDEDCVSDNGRWRCQCKQDFNV. N-linked (GlcNAc...) asparagine glycosylation occurs at asparagine 325. The segment at 337-432 is ZP-N; the sequence is ECEANEIKIS…RINFECSYPL (96 aa). In terms of domain architecture, ZP spans 337-592; that stretch reads ECEANEIKIS…PTCSGTRYRS (256 aa). N-linked (GlcNAc...) asparagine glycans are attached at residues asparagine 399 and asparagine 450. Positions 433–456 are flexible ZP-N/ZP-C linker; important for secretion and polymerization into filaments; that stretch reads DMKVSLKTSLQPMVSALNISLGGT. The interval 457–467 is internal hydrophobic patch (IHP); it reads GKFTVQMALFQ. Residues 457 to 592 form a ZP-C region; that stretch reads GKFTVQMALF…PTCSGTRYRS (136 aa). 3 cysteine pairs are disulfide-bonded: cysteine 509–cysteine 569, cysteine 530–cysteine 585, and cysteine 574–cysteine 581. N-linked (GlcNAc...) asparagine glycosylation is present at asparagine 516. Residues 589–592 form an essential for cleavage by HPN region; the sequence is RYRS. Positions 601–609 are external hydrophobic patch (EHP); regulates polymerization into filaments; it reads VLNLGPITR. The GPI-anchor amidated serine moiety is linked to residue serine 615. The propeptide at 616-644 is removed in mature form; the sequence is VSKAASSNLGFLSIWLLLFLSATLTLMVH.

Homodimer that then polymerizes into long filaments. The filaments can additionally assemble laterally to form a sheet. The filaments consist of a zigzag-shaped backbone with laterally protruding arms which interact with bacterial adhesin fimH. Two fimH molecules can bind to a single UMOD monomer. In terms of processing, N-glycosylated. Proteolytically cleaved at a conserved C-terminal proteolytic cleavage site to generate the secreted form found in urine. This cleavage is catalyzed by HPN. As to expression, expression restricted to the thick ascending limb of the loop of Henle (TALH).

The protein resides in the apical cell membrane. Its subcellular location is the basolateral cell membrane. It localises to the cell projection. It is found in the cilium membrane. The protein localises to the secreted. Its function is as follows. Functions in biogenesis and organization of the apical membrane of epithelial cells of the thick ascending limb of Henle's loop (TALH), where it promotes formation of complex filamentous gel-like structure that may play a role in the water barrier permeability. May serve as a receptor for binding and endocytosis of cytokines (IL-1, IL-2) and TNF. Facilitates neutrophil migration across renal epithelia. In the urine, may contribute to colloid osmotic pressure, retards passage of positively charged electrolytes, and inhibits formation of liquid containing supersaturated salts and subsequent formation of salt crystals. Protects against urinary tract infections by binding to type 1 fimbriated E.coli. Binds to bacterial adhesin fimH which mediates the stable formation of bacterial aggregates, prevents the binding of E.coli to uroplakins UPK1A and UPK1B which act as urothelial receptors for type I fimbriae, and allows for pathogen clearance through micturation. Also promotes aggregation of other bacteria including K.pneumoniae, P.aeruginosa and S.mitis and so may also protect against other uropathogens. The sequence is that of Uromodulin (Umod) from Rattus norvegicus (Rat).